Consider the following 350-residue polypeptide: Integrin beta-1-binding protein 2 (350 aa).

4 residues coordinate Zn(2+): Cys-5, Cys-10, Cys-24, and His-27. Positions 5–64 (CYNKGCGQHFDPNTNLPDSCRYHPGVPIFHDALKGWSCCRKRTVDFSEFLNIKGCTVGLH) constitute a CHORD 1 domain. An SH3-binding motif is present at residues 28-31 (PGVP). Residues Cys-42, Cys-43, Cys-59, and His-64 each coordinate Zn(2+). The SH3-binding motif lies at 70–79 (PEVPPQPEGP). The tract at residues 72 to 92 (VPPQPEGPATSSLQEQKPLNT) is disordered. The span at 80–92 (ATSSLQEQKPLNT) shows a compositional bias: polar residues. Positions 150 and 155 each coordinate Zn(2+). One can recognise a CHORD 2 domain in the interval 150-209 (CQNPGCDAVYQGPESDATPCTYHPGAPRFHEGMKSWSCCGIQTLDFGAFLAQPGCRVGRH). An SH2-binding motif is present at residues 159 to 162 (YQGP). Residues Cys-169 and His-172 each coordinate Zn(2+). The SH3-binding signature appears at 173 to 176 (PGAP). The Zn(2+) site is built by Cys-187, Cys-188, Cys-204, and His-209. Residues 216 to 305 (PASCRHDWHQ…ADPGSWAQLE (90 aa)) enclose the CS domain. The SH2-binding signature appears at 235-238 (YGQI). Positions 317 to 350 (GVLLEMDEEESEDSDDDLSWTEEEDEEEEEAMGE) are disordered. The span at 321 to 350 (EMDEEESEDSDDDLSWTEEEDEEEEEAMGE) shows a compositional bias: acidic residues.

Interacts with beta-1 integrin subunit. This interaction is regulated by divalent cations, and it occurs only in absence of calcium. In terms of tissue distribution, expressed in skeletal and cardiac muscles but not in other tissues. Is localized in rows flanking the Z line containing alpha-actinin.

Functionally, may play a role during maturation and/or organization of muscles cells. The protein is Integrin beta-1-binding protein 2 (Itgb1bp2) of Mus musculus (Mouse).